Reading from the N-terminus, the 282-residue chain is Acetylglutamate kinase (282 aa).

Residues 62–63 (GG), R84, and N178 each bind substrate.

This sequence belongs to the acetylglutamate kinase family. ArgB subfamily.

It is found in the cytoplasm. It carries out the reaction N-acetyl-L-glutamate + ATP = N-acetyl-L-glutamyl 5-phosphate + ADP. It participates in amino-acid biosynthesis; L-arginine biosynthesis; N(2)-acetyl-L-ornithine from L-glutamate: step 2/4. Functionally, catalyzes the ATP-dependent phosphorylation of N-acetyl-L-glutamate. The chain is Acetylglutamate kinase from Thermotoga petrophila (strain ATCC BAA-488 / DSM 13995 / JCM 10881 / RKU-1).